The sequence spans 328 residues: Urokinase plasminogen activator surface receptor (328 aa).

The N-terminal stretch at 1–24 is a signal peptide; that stretch reads MGLLRRRLLLLVVVVTTCVPASQG. UPAR/Ly6 domains lie at 25 to 118, 118 to 213, and 214 to 299; these read LRCI…GRYL, LECA…PPNG, and FQCY…RPTG. Disulfide bonds link C27–C48, C30–C36, and C41–C69. An N-linked (GlcNAc...) asparagine glycan is attached at N76. 11 disulfide bridges follow: C95–C100, C120–C147, C123–C130, C140–C169, C175–C192, C193–C198, C216–C244, C219–C227, C237–C263, C269–C288, and C289–C294. Residues N184, N194, N222, N255, N283, and N290 are each glycosylated (N-linked (GlcNAc...) asparagine). G299 is lipidated: GPI-anchor amidated glycine. A propeptide spans 300–328 (removed in mature form); it reads GAPGPGPAHLILIASLLLTLRLWGIPLWT.

In terms of assembly, monomer. Interacts (via the UPAR/Ly6 domains) with SRPX2. Interacts with MRC2. Interacts with SORL1 (via N-terminal ectodomain); this interaction decreases PLAUR internalization. The ternary complex composed of PLAUR-PLAU-SERPINE1 also interacts with SORL1. Interacts with CD82; this interaction prevents PLAUR from binding to its high affinity ligand PLAU.

It localises to the cell membrane. It is found in the secreted. Its function is as follows. Acts as a receptor for urokinase plasminogen activator. Plays a role in localizing and promoting plasmin formation. Mediates the proteolysis-independent signal transduction activation effects of U-PA. This Rattus norvegicus (Rat) protein is Urokinase plasminogen activator surface receptor (Plaur).